The chain runs to 356 residues: Mitogen-activated protein kinase PMK1 (356 aa).

The Protein kinase domain occupies 24–312; that stretch reads YDIQDVVGEG…VEEALKHPYL (289 aa). ATP is bound by residues 30-38 and Lys53; that span reads VGEGAYGVV.

The protein belongs to the protein kinase superfamily. CMGC Ser/Thr protein kinase family. MAP kinase subfamily. It depends on Mg(2+) as a cofactor. In terms of processing, phosphorylated by MST7.

The enzyme catalyses L-seryl-[protein] + ATP = O-phospho-L-seryl-[protein] + ADP + H(+). It carries out the reaction L-threonyl-[protein] + ATP = O-phospho-L-threonyl-[protein] + ADP + H(+). Mitogen-activated protein kinase; part of the MST11-MST7-PMK1 MAP kinase (MAPK) cascade that is essential for appressorium formation, penetration and invasive growth. Central regulator of appressorium development that acts downstream of the cAMP signal. The MST11-MST7-PMK1 MAP kinase cascade transduces signals from the cell surface sensors MDB2 and SHO1 that recognize various surface signals such as surface hydrophobicity, cutin monomers, and rice leaf waxes. Regulates expression of secreted fungal effector proteins implicated of host immune defenses, preventing reactive oxygen species generation and excessive callose deposition at plasmodesmata. Furthermore, controls the hyphal constriction required for fungal growth from one rice cell to the neighboring cell, enabling host tissue colonization and blast disease. Targets downstream of the PMK1-MAPK pathway include transcription factor MST12 and pathogenicity-related genes GAS1 and GAS2, both of which are expressed during appressorium formation, even if regulation of MST12 is not associated with expression of GAS1 or GAS2. This is Mitogen-activated protein kinase PMK1 from Pyricularia oryzae (Rice blast fungus).